The following is a 119-amino-acid chain: Ribonuclease P protein component (119 aa).

Belongs to the RnpA family. Consists of a catalytic RNA component (M1 or rnpB) and a protein subunit.

It catalyses the reaction Endonucleolytic cleavage of RNA, removing 5'-extranucleotides from tRNA precursor.. In terms of biological role, RNaseP catalyzes the removal of the 5'-leader sequence from pre-tRNA to produce the mature 5'-terminus. It can also cleave other RNA substrates such as 4.5S RNA. The protein component plays an auxiliary but essential role in vivo by binding to the 5'-leader sequence and broadening the substrate specificity of the ribozyme. In Dictyoglomus turgidum (strain DSM 6724 / Z-1310), this protein is Ribonuclease P protein component.